Consider the following 146-residue polypeptide: D-aminoacyl-tRNA deacylase (146 aa).

A Gly-cisPro motif, important for rejection of L-amino acids motif is present at residues 138–139; the sequence is GP.

It belongs to the DTD family. Homodimer.

It localises to the cytoplasm. The enzyme catalyses glycyl-tRNA(Ala) + H2O = tRNA(Ala) + glycine + H(+). The catalysed reaction is a D-aminoacyl-tRNA + H2O = a tRNA + a D-alpha-amino acid + H(+). Functionally, an aminoacyl-tRNA editing enzyme that deacylates mischarged D-aminoacyl-tRNAs. Also deacylates mischarged glycyl-tRNA(Ala), protecting cells against glycine mischarging by AlaRS. Acts via tRNA-based rather than protein-based catalysis; rejects L-amino acids rather than detecting D-amino acids in the active site. By recycling D-aminoacyl-tRNA to D-amino acids and free tRNA molecules, this enzyme counteracts the toxicity associated with the formation of D-aminoacyl-tRNA entities in vivo and helps enforce protein L-homochirality. This chain is D-aminoacyl-tRNA deacylase, found in Xanthomonas axonopodis pv. citri (strain 306).